Reading from the N-terminus, the 516-residue chain is GMP synthase [glutamine-hydrolyzing] (516 aa).

The Glutamine amidotransferase type-1 domain occupies 10 to 201; it reads KIIVLDFGSQ…AFDVCGAVAN (192 aa). Cysteine 87 (nucleophile) is an active-site residue. Catalysis depends on residues histidine 175 and glutamate 177. The region spanning 202–391 is the GMPS ATP-PPase domain; the sequence is WTMADFIDMQ…LGIPHDLVWR (190 aa). 229–235 provides a ligand contact to ATP; it reads SGGVDSS.

Homodimer.

It catalyses the reaction XMP + L-glutamine + ATP + H2O = GMP + L-glutamate + AMP + diphosphate + 2 H(+). The protein operates within purine metabolism; GMP biosynthesis; GMP from XMP (L-Gln route): step 1/1. Its function is as follows. Catalyzes the synthesis of GMP from XMP. In Lactobacillus acidophilus (strain ATCC 700396 / NCK56 / N2 / NCFM), this protein is GMP synthase [glutamine-hydrolyzing].